A 456-amino-acid chain; its full sequence is Proline-specific permease ProY (456 aa).

Residues 1-17 (MESNNKLKRGLSTRHIR) are Cytoplasmic-facing. 2 helical membrane-spanning segments follow: residues 18-38 (FMAL…DAIK) and 39-59 (MAGP…YIIM). At 60–95 (RALGEMSVHNPAASSFSRYAQENLGPLAGYITGWTY) the chain is on the cytoplasmic side. Transmembrane regions (helical) follow at residues 96-116 (CFEI…YMGV) and 117-137 (WFPA…ICAI). Residues 138–156 (NLMSVKVFGELEFWFSFFK) lie on the Cytoplasmic side of the membrane. The helical transmembrane segment at 157-177 (VATIIIMIVAGIGIIVWGIGN) threads the bilayer. The Periplasmic segment spans residues 178 to 197 (GGQPTGIHNLWSNGGFFSNG). A helical transmembrane segment spans residues 198–218 (WLGMIMSLQMVMFAYGGIEII). The Cytoplasmic portion of the chain corresponds to 219 to 242 (GITAGEAKDPEKSIPRAINSVPMR). A helical membrane pass occupies residues 243 to 263 (ILVFYVGTLFVIMSIYPWNQV). Over 264–277 (GTNGSPFVLTFQHM) the chain is Periplasmic. Residues 278-298 (GITFAASILNFVVLTASLSAI) traverse the membrane as a helical segment. Residues 299 to 331 (NSDVFGVGRMLHGMAEQGSAPKVFAKTSRRGIP) lie on the Cytoplasmic side of the membrane. A helical membrane pass occupies residues 332-352 (WVTVLVMTIALLFAVYLNYIM). The Periplasmic segment spans residues 353-355 (PEN). Residues 356–376 (VFLVIASLATFATVWVWIMIL) form a helical membrane-spanning segment. Residues 377–399 (LSQIAFRRRLPPEEVKALKFKVP) are Cytoplasmic-facing. The helical transmembrane segment at 400-420 (GGVVTTIAGLIFLVFIIALIG) threads the bilayer. Residues 421–424 (YHPD) are Periplasmic-facing. A helical membrane pass occupies residues 425-445 (TRISLYVGFAWIVLLLIGWIF). The Cytoplasmic portion of the chain corresponds to 446 to 456 (KRRRDRQLAQA).

Belongs to the amino acid-polyamine-organocation (APC) superfamily. Amino acid transporter (AAT) (TC 2.A.3.1) family.

The protein localises to the cell inner membrane. Functionally, permease that is involved in the transport across the cytoplasmic membrane of proline. The chain is Proline-specific permease ProY (proY) from Salmonella typhimurium (strain LT2 / SGSC1412 / ATCC 700720).